The chain runs to 341 residues: NADH-quinone oxidoreductase subunit H (341 aa).

Transmembrane regions (helical) follow at residues 16 to 36 (LLII…AVAY), 86 to 106 (VVFV…WAVI), 119 to 139 (VGVL…IMAG), 165 to 185 (IGFI…SDVV), 191 to 211 (MWFI…GLAE), 254 to 274 (GAMT…LGWL), 276 to 296 (IPGL…FLWV), and 315 to 335 (VFLP…TAFG).

This sequence belongs to the complex I subunit 1 family. As to quaternary structure, NDH-1 is composed of 14 different subunits. Subunits NuoA, H, J, K, L, M, N constitute the membrane sector of the complex.

It localises to the cell inner membrane. The enzyme catalyses a quinone + NADH + 5 H(+)(in) = a quinol + NAD(+) + 4 H(+)(out). Its function is as follows. NDH-1 shuttles electrons from NADH, via FMN and iron-sulfur (Fe-S) centers, to quinones in the respiratory chain. The immediate electron acceptor for the enzyme in this species is believed to be ubiquinone. Couples the redox reaction to proton translocation (for every two electrons transferred, four hydrogen ions are translocated across the cytoplasmic membrane), and thus conserves the redox energy in a proton gradient. This subunit may bind ubiquinone. In Paramagnetospirillum magneticum (strain ATCC 700264 / AMB-1) (Magnetospirillum magneticum), this protein is NADH-quinone oxidoreductase subunit H.